Reading from the N-terminus, the 142-residue chain is uncharacterized protein (142 aa).

The first 20 residues, 1-20, serve as a signal peptide directing secretion; that stretch reads MPSVNEFFIFFLIVWHTCEC. Asparagine 80 is a glycosylation site (N-linked (GlcNAc...) asparagine).

This is an uncharacterized protein from Dictyostelium discoideum (Social amoeba).